The chain runs to 669 residues: Phosphatidylinositol-3-phosphate phosphatase MTMR1 (669 aa).

The residue at position 1 (M1) is an N-acetylmethionine. The segment covering 1-17 (MDRPVAAAAAASAASCE) has biased composition (low complexity). The segment at 1–55 (MDRPVAAAAAASAASCEGAGGPGPGPGASWRPSRVAGGASASSRHPSIETLDSPT) is disordered. Phosphoserine occurs at positions 47 and 53. The region spanning 94–165 (NKLAQMEEAP…GVISRVEKIG (72 aa)) is the GRAM domain. A Myotubularin phosphatase domain is found at 230–605 (GWKVYDPVSE…SHLELWVNYY (376 aa)). Residues N355, N380, and I381 each coordinate a 1,2-diacyl-sn-glycero-3-phospho-(1D-myo-inositol-3-phosphate). C442 (phosphocysteine intermediate) is an active-site residue. 7 residues coordinate a 1,2-diacyl-sn-glycero-3-phospho-(1D-myo-inositol-3-phosphate): S443, D444, G445, W446, D447, R448, and R488. S443 is a phosphate binding site. Residues G445, W446, D447, and R448 each coordinate phosphate. The interval 612-669 (MRPQMPIHQNLKELLAIKAELQKRVEDLQREMATRTISSSSERGSSPTHSATPVHTSV) is required for dimerization. Positions 644 to 669 (ATRTISSSSERGSSPTHSATPVHTSV) are disordered. Positions 649–661 (SSSSERGSSPTHS) are enriched in low complexity.

This sequence belongs to the protein-tyrosine phosphatase family. Non-receptor class myotubularin subfamily. In terms of assembly, homodimer. Widely expressed. Detected in skeletal muscle, heart, lung, liver and brain.

The protein resides in the cell membrane. The protein localises to the cytoplasm. It carries out the reaction a 1,2-diacyl-sn-glycero-3-phospho-(1D-myo-inositol-3-phosphate) + H2O = a 1,2-diacyl-sn-glycero-3-phospho-(1D-myo-inositol) + phosphate. It catalyses the reaction 1,2-dioctanoyl-sn-glycero-3-phospho-(1-D-myo-inositol-3-phosphate) + H2O = 1,2-dioctanoyl-sn-glycero-3-phospho-(1D-myo-inositol) + phosphate. The enzyme catalyses a 1,2-diacyl-sn-glycero-3-phospho-(1D-myo-inositol-3,5-bisphosphate) + H2O = a 1,2-diacyl-sn-glycero-3-phospho-(1D-myo-inositol-5-phosphate) + phosphate. Its function is as follows. Lipid phosphatase that specifically dephosphorylates the D-3 position of phosphatidylinositol 3-phosphate, generating phosphatidylinositol. Could also dephosphorylate phosphatidylinositol 3,5-bisphosphate to produce phosphatidylinositol 5-phosphate. This Mus musculus (Mouse) protein is Phosphatidylinositol-3-phosphate phosphatase MTMR1.